The primary structure comprises 219 residues: Elongation factor Ts, chloroplastic (219 aa).

Belongs to the EF-Ts family.

The protein resides in the plastid. It localises to the chloroplast. Associates with the EF-Tu.GDP complex and induces the exchange of GDP to GTP. It remains bound to the aminoacyl-tRNA.EF-Tu.GTP complex up to the GTP hydrolysis stage on the ribosome. The protein is Elongation factor Ts, chloroplastic (tsf) of Rhodomonas salina (Cryptomonas salina).